A 233-amino-acid chain; its full sequence is MVVDAKEVEMINTLVFETLGNPEKEREFKLKSLKRWGFDLIFGKVDGKETYFTVELDERKAGDKFSKDGKEYEVIEVLQELPKNTELYAHIEMEMGKAYIVCQLRDEDGKNTEVLRVPAATLLLAFLKKNKLANIIKAIKNVGISLELSMQNGVGGKPLSYEELPNVARRFIRSARKVEKETGFGRLSFAYYGETKDGEPRYRFSWLLPTIALFDLDIAKKVEQTLGILKVSE.

This sequence belongs to the UPF0128 family.

In Methanocaldococcus jannaschii (strain ATCC 43067 / DSM 2661 / JAL-1 / JCM 10045 / NBRC 100440) (Methanococcus jannaschii), this protein is UPF0128 protein MJ1463.